Here is a 165-residue protein sequence, read N- to C-terminus: MYIEMVDETGQVSKEMLQQTQEILEFAAQKLGKEDKEMAVTFVTNERSHELNLEYRDTDRPTDVISLEYKPELEIAFDEEDLLENPELAEMMSEFDAYIGELFISIDKAHEQAEEYGHSFEREMGFLAVHGFLHINGYDHYTPEEEAEMFGLQEEILTAYGLTRQ.

3 residues coordinate Zn(2+): His130, His134, and His140.

This sequence belongs to the endoribonuclease YbeY family. It depends on Zn(2+) as a cofactor.

The protein resides in the cytoplasm. Single strand-specific metallo-endoribonuclease involved in late-stage 70S ribosome quality control and in maturation of the 3' terminus of the 16S rRNA. In Streptococcus pneumoniae serotype 2 (strain D39 / NCTC 7466), this protein is Endoribonuclease YbeY.